A 377-amino-acid polypeptide reads, in one-letter code: Histidinol-phosphate aminotransferase 2 (377 aa).

Positions 17–44 (NLSPYVPGEQPQHDDLCKLNTNENPFPP) are disordered. Residue Lys-228 is modified to N6-(pyridoxal phosphate)lysine.

It belongs to the class-II pyridoxal-phosphate-dependent aminotransferase family. Histidinol-phosphate aminotransferase subfamily. As to quaternary structure, homodimer. The cofactor is pyridoxal 5'-phosphate.

The enzyme catalyses L-histidinol phosphate + 2-oxoglutarate = 3-(imidazol-4-yl)-2-oxopropyl phosphate + L-glutamate. Its pathway is amino-acid biosynthesis; L-histidine biosynthesis; L-histidine from 5-phospho-alpha-D-ribose 1-diphosphate: step 7/9. This is Histidinol-phosphate aminotransferase 2 from Psychrobacter arcticus (strain DSM 17307 / VKM B-2377 / 273-4).